The sequence spans 286 residues: NH(3)-dependent NAD(+) synthetase (286 aa).

Residue 43–50 (GVSGGVDS) coordinates ATP. D49 serves as a coordination point for Mg(2+). Residue R131 participates in deamido-NAD(+) binding. T151 serves as a coordination point for ATP. Mg(2+) is bound at residue E156. Residues K164 and D171 each coordinate deamido-NAD(+). ATP contacts are provided by K180 and S202. The interval 257 to 286 (HEASSHKRSPPASPDLGEIKKHYKQHAGKK) is disordered. Deamido-NAD(+) is bound at residue 262-263 (HK). The span at 277-286 (KHYKQHAGKK) shows a compositional bias: basic residues.

Belongs to the NAD synthetase family. As to quaternary structure, homodimer.

It carries out the reaction deamido-NAD(+) + NH4(+) + ATP = AMP + diphosphate + NAD(+) + H(+). It functions in the pathway cofactor biosynthesis; NAD(+) biosynthesis; NAD(+) from deamido-NAD(+) (ammonia route): step 1/1. Catalyzes the ATP-dependent amidation of deamido-NAD to form NAD. Uses ammonia as a nitrogen source. This is NH(3)-dependent NAD(+) synthetase from Aeropyrum pernix (strain ATCC 700893 / DSM 11879 / JCM 9820 / NBRC 100138 / K1).